A 205-amino-acid chain; its full sequence is Anaerobic dimethyl sulfoxide reductase chain B (205 aa).

3 consecutive 4Fe-4S ferredoxin-type domains span residues 5 to 33 (YGFF…LTPE), 59 to 89 (FAYY…KRED), and 90 to 119 (GFVV…YNET). Positions 14, 17, 20, 24, 67, 70, 75, 79, 99, 102, 105, 109, 126, 129, 141, and 145 each coordinate [4Fe-4S] cluster. The interval 184–205 (KPNANSRPTGDTTGYLANPKEV) is disordered. Over residues 186-195 (NANSRPTGDT) the composition is skewed to polar residues.

As to quaternary structure, heterotrimeric enzyme composed of a catalytic heterodimer (DmsAB) and a membrane anchor protein (DmsC). Requires [4Fe-4S] cluster as cofactor.

Its function is as follows. Electron transfer subunit of the terminal reductase during anaerobic growth on various sulfoxide and N-oxide compounds. The polypeptide is Anaerobic dimethyl sulfoxide reductase chain B (dmsB) (Shigella flexneri).